Reading from the N-terminus, the 241-residue chain is DNA repair protein RecO (241 aa).

This sequence belongs to the RecO family.

Involved in DNA repair and RecF pathway recombination. The chain is DNA repair protein RecO from Roseobacter denitrificans (strain ATCC 33942 / OCh 114) (Erythrobacter sp. (strain OCh 114)).